The sequence spans 353 residues: Protein RecA (353 aa).

68–75 (GPESSGKT) contacts ATP.

It belongs to the RecA family.

It localises to the cytoplasm. Can catalyze the hydrolysis of ATP in the presence of single-stranded DNA, the ATP-dependent uptake of single-stranded DNA by duplex DNA, and the ATP-dependent hybridization of homologous single-stranded DNAs. It interacts with LexA causing its activation and leading to its autocatalytic cleavage. This Roseiflexus castenholzii (strain DSM 13941 / HLO8) protein is Protein RecA.